A 431-amino-acid chain; its full sequence is 5-methylthioadenosine/S-adenosylhomocysteine deaminase (431 aa).

Zn(2+)-binding residues include H66 and H68. Substrate contacts are provided by E95, R147, and H185. A Zn(2+)-binding site is contributed by H212. Substrate is bound by residues E215 and D300. D300 is a Zn(2+) binding site.

This sequence belongs to the metallo-dependent hydrolases superfamily. MTA/SAH deaminase family. It depends on Zn(2+) as a cofactor.

The enzyme catalyses S-adenosyl-L-homocysteine + H2O + H(+) = S-inosyl-L-homocysteine + NH4(+). The catalysed reaction is S-methyl-5'-thioadenosine + H2O + H(+) = S-methyl-5'-thioinosine + NH4(+). In terms of biological role, catalyzes the deamination of 5-methylthioadenosine and S-adenosyl-L-homocysteine into 5-methylthioinosine and S-inosyl-L-homocysteine, respectively. Is also able to deaminate adenosine. In Desulfitobacterium hafniense (strain DSM 10664 / DCB-2), this protein is 5-methylthioadenosine/S-adenosylhomocysteine deaminase.